Here is a 558-residue protein sequence, read N- to C-terminus: 2-isopropylmalate synthase (558 aa).

In terms of domain architecture, Pyruvate carboxyltransferase spans 30-303 (PIWCSVDLRD…DPELDCRDIE (274 aa)). Positions 39, 242, 244, and 278 each coordinate Mg(2+). A regulatory domain region spans residues 437–558 (QPNARIKFVD…ANRVLEERAK (122 aa)).

This sequence belongs to the alpha-IPM synthase/homocitrate synthase family. LeuA type 2 subfamily. Homodimer. It depends on Mg(2+) as a cofactor.

Its subcellular location is the cytoplasm. It catalyses the reaction 3-methyl-2-oxobutanoate + acetyl-CoA + H2O = (2S)-2-isopropylmalate + CoA + H(+). It participates in amino-acid biosynthesis; L-leucine biosynthesis; L-leucine from 3-methyl-2-oxobutanoate: step 1/4. Catalyzes the condensation of the acetyl group of acetyl-CoA with 3-methyl-2-oxobutanoate (2-ketoisovalerate) to form 3-carboxy-3-hydroxy-4-methylpentanoate (2-isopropylmalate). The protein is 2-isopropylmalate synthase of Agrobacterium fabrum (strain C58 / ATCC 33970) (Agrobacterium tumefaciens (strain C58)).